Reading from the N-terminus, the 411-residue chain is Putative competence-damage inducible protein (411 aa).

Belongs to the CinA family.

In Clostridium acetobutylicum (strain ATCC 824 / DSM 792 / JCM 1419 / IAM 19013 / LMG 5710 / NBRC 13948 / NRRL B-527 / VKM B-1787 / 2291 / W), this protein is Putative competence-damage inducible protein.